The sequence spans 105 residues: Small ribosomal subunit protein uS10 (105 aa).

This sequence belongs to the universal ribosomal protein uS10 family. In terms of assembly, part of the 30S ribosomal subunit.

In terms of biological role, involved in the binding of tRNA to the ribosomes. The sequence is that of Small ribosomal subunit protein uS10 from Rickettsia conorii (strain ATCC VR-613 / Malish 7).